The primary structure comprises 345 residues: D-alanine--D-alanine ligase (345 aa).

In terms of domain architecture, ATP-grasp spans 133–332 (KWLCHARGVK…LPHTKRAKVT (200 aa)). 160 to 211 (AYPIIVKPSRLGSSIGVSIVKDESKLDYALDSAFEFDNTVIVEPFLEGVKEY) is a binding site for ATP. Positions 284, 296, and 298 each coordinate Mg(2+).

It belongs to the D-alanine--D-alanine ligase family. It depends on Mg(2+) as a cofactor. Requires Mn(2+) as cofactor.

It localises to the cytoplasm. The catalysed reaction is 2 D-alanine + ATP = D-alanyl-D-alanine + ADP + phosphate + H(+). The protein operates within cell wall biogenesis; peptidoglycan biosynthesis. In terms of biological role, cell wall formation. The sequence is that of D-alanine--D-alanine ligase from Sulfurimonas denitrificans (strain ATCC 33889 / DSM 1251) (Thiomicrospira denitrificans (strain ATCC 33889 / DSM 1251)).